We begin with the raw amino-acid sequence, 259 residues long: MFARLAILLYAIVSYAAFTVSFLYALGFVGNYVVPKSIDVGSPTNLGEAILVNLLLMSLFAIQHSVMARPAFKRWWAKFLPLACQRSTYVLLSSLILLLLFWQWRPIPTPVWQTSGIAAWLLIGVHWLGWLIAFASTHMIDHFDLFGLRQAFVAFRGTEISGQSFRTPLLYKIVRHPLMLGFLLAFWATPAMTAGHLLFALANTAYILVALQFEERDLIAEFGATYQDYRRRVPMLVPRLFARRRTDDRKSPRPVGAPR.

The next 5 helical transmembrane spans lie at 5 to 25, 46 to 66, 88 to 108, 115 to 135, and 182 to 202; these read LAILLYAIVSYAAFTVSFLYA, LGEAILVNLLLMSLFAIQHSV, TYVLLSSLILLLLFWQWRPIP, SGIAAWLLIGVHWLGWLIAFA, and FLLAFWATPAMTAGHLLFALA.

It belongs to the nurim family.

The protein resides in the membrane. The enzyme catalyses methanethiol + S-adenosyl-L-methionine = dimethyl sulfide + S-adenosyl-L-homocysteine + H(+). Its function is as follows. Catalyzes the methylation of methanethiol (MeSH) to yield dimethylsulphide (DMS). The sequence is that of Methanethiol S-methyltransferase 2 from Bradyrhizobium diazoefficiens (strain JCM 10833 / BCRC 13528 / IAM 13628 / NBRC 14792 / USDA 110).